Here is a 597-residue protein sequence, read N- to C-terminus: Large ribosomal subunit assembly factor BipA (597 aa).

Positions 3 to 198 constitute a tr-type G domain; the sequence is LPIRNVAIIA…AILHHVPPPA (196 aa). GTP contacts are provided by residues 15–20 and 128–131; these read DHGKTT and NKID.

The protein belongs to the TRAFAC class translation factor GTPase superfamily. Classic translation factor GTPase family. BipA subfamily. As to quaternary structure, monomer.

It localises to the cytoplasm. It carries out the reaction GTP + H2O = GDP + phosphate + H(+). Its function is as follows. A 50S ribosomal subunit assembly protein with GTPase activity, required for 50S subunit assembly at low temperatures, may also play a role in translation. Binds GTP and analogs. Binds the 70S ribosome between the 30S and 50S subunits, in a similar position as ribosome-bound EF-G; it contacts a number of ribosomal proteins, both rRNAs and the A-site tRNA. This chain is Large ribosomal subunit assembly factor BipA, found in Synechocystis sp. (strain ATCC 27184 / PCC 6803 / Kazusa).